A 243-amino-acid chain; its full sequence is ATP synthase subunit b, mitochondrial (243 aa).

The protein belongs to the eukaryotic ATPase B chain family. In terms of assembly, F-type ATPases have 2 components, CF(1) - the catalytic core - and CF(0) - the membrane proton channel. CF(1) has five subunits: alpha(3), beta(3), gamma(1), delta(1), epsilon(1). CF(0) has three main subunits: a, b and c.

The protein localises to the mitochondrion. It is found in the mitochondrion inner membrane. In terms of biological role, mitochondrial membrane ATP synthase (F(1)F(0) ATP synthase or Complex V) produces ATP from ADP in the presence of a proton gradient across the membrane which is generated by electron transport complexes of the respiratory chain. F-type ATPases consist of two structural domains, F(1) - containing the extramembraneous catalytic core, and F(0) - containing the membrane proton channel, linked together by a central stalk and a peripheral stalk. During catalysis, ATP synthesis in the catalytic domain of F(1) is coupled via a rotary mechanism of the central stalk subunits to proton translocation. Part of the complex F(0) domain and the peripheric stalk, which acts as a stator to hold the catalytic alpha(3)beta(3) subcomplex and subunit a/ATP6 static relative to the rotary elements. The sequence is that of ATP synthase subunit b, mitochondrial from Drosophila melanogaster (Fruit fly).